A 300-amino-acid chain; its full sequence is Tyrosine recombinase XerC (300 aa).

The Core-binding (CB) domain occupies 4–90; that stretch reads VALSLDVSRF…ALRSFFDWLV (87 aa). Residues 111–290 enclose the Tyr recombinase domain; sequence HLPKNIDVDD…DFQHLASVYD (180 aa). Catalysis depends on residues arginine 150, lysine 174, histidine 242, arginine 245, and histidine 268. Tyrosine 277 serves as the catalytic O-(3'-phospho-DNA)-tyrosine intermediate.

The protein belongs to the 'phage' integrase family. XerC subfamily. Forms a cyclic heterotetrameric complex composed of two molecules of XerC and two molecules of XerD, in which XerC interacts with XerD via its C-terminal region, XerD interacts with XerC via its C-terminal region and so on.

It is found in the cytoplasm. Its activity is regulated as follows. FtsK may regulate the catalytic switch between XerC and XerD in the heterotetrameric complex during the two steps of the recombination process. Functionally, site-specific tyrosine recombinase, which acts by catalyzing the cutting and rejoining of the recombining DNA molecules. Binds cooperatively to specific DNA consensus sequences that are separated from XerD binding sites by a short central region, forming the heterotetrameric XerC-XerD complex that recombines DNA substrates. The complex is essential to convert dimers of the bacterial chromosome into monomers to permit their segregation at cell division. It also contributes to the segregational stability of plasmids. In the complex XerC specifically exchanges the top DNA strands. This chain is Tyrosine recombinase XerC, found in Salmonella typhi.